The sequence spans 363 residues: Elongation factor Tu, chloroplastic (363 aa).

Residues 1–189 (TLTAAITMAL…NVDEYIPTPE (189 aa)) form the tr-type G domain. GTP is bound by residues 55–59 (DCPGH) and 110–113 (NKED).

Belongs to the TRAFAC class translation factor GTPase superfamily. Classic translation factor GTPase family. EF-Tu/EF-1A subfamily.

Its subcellular location is the plastid. The protein resides in the chloroplast. The catalysed reaction is GTP + H2O = GDP + phosphate + H(+). Its function is as follows. GTP hydrolase that promotes the GTP-dependent binding of aminoacyl-tRNA to the A-site of ribosomes during protein biosynthesis. The polypeptide is Elongation factor Tu, chloroplastic (tufA) (Gymnochlora stellata).